A 291-amino-acid polypeptide reads, in one-letter code: Formamidopyrimidine-DNA glycosylase (291 aa).

Pro-2 serves as the catalytic Schiff-base intermediate with DNA. The Proton donor role is filled by Glu-3. Lys-58 acts as the Proton donor; for beta-elimination activity in catalysis. 3 residues coordinate DNA: His-100, Arg-123, and Lys-166. The segment at Ser-257 to Lys-291 adopts an FPG-type zinc-finger fold. The active-site Proton donor; for delta-elimination activity is Arg-281.

The protein belongs to the FPG family. In terms of assembly, monomer. Zn(2+) serves as cofactor.

The catalysed reaction is Hydrolysis of DNA containing ring-opened 7-methylguanine residues, releasing 2,6-diamino-4-hydroxy-5-(N-methyl)formamidopyrimidine.. The enzyme catalyses 2'-deoxyribonucleotide-(2'-deoxyribose 5'-phosphate)-2'-deoxyribonucleotide-DNA = a 3'-end 2'-deoxyribonucleotide-(2,3-dehydro-2,3-deoxyribose 5'-phosphate)-DNA + a 5'-end 5'-phospho-2'-deoxyribonucleoside-DNA + H(+). Its function is as follows. Involved in base excision repair of DNA damaged by oxidation or by mutagenic agents. Acts as a DNA glycosylase that recognizes and removes damaged bases. Has a preference for oxidized purines, such as 7,8-dihydro-8-oxoguanine (8-oxoG). Has AP (apurinic/apyrimidinic) lyase activity and introduces nicks in the DNA strand. Cleaves the DNA backbone by beta-delta elimination to generate a single-strand break at the site of the removed base with both 3'- and 5'-phosphates. The chain is Formamidopyrimidine-DNA glycosylase from Bartonella henselae (strain ATCC 49882 / DSM 28221 / CCUG 30454 / Houston 1) (Rochalimaea henselae).